A 473-amino-acid polypeptide reads, in one-letter code: Cephalotoxin-like protein (473 aa).

The first 21 residues, Arg1 to Gly21, serve as a signal peptide directing secretion. Coiled coils occupy residues Ala40 to Lys60 and Leu116 to Ala147.

As to expression, component of the acid-insoluble and acid-soluble organic matrix of the aragonitic skeleton (at protein level).

Its subcellular location is the secreted. The protein is Cephalotoxin-like protein of Acropora millepora (Staghorn coral).